The following is a 384-amino-acid chain: MNKDGTVVLMNELASYASDPSKTRGRRHSEPPPENRTEFQRDRDRIIHSNAFRRLEYKTQVFVNHEGDLFRTRLTHSLEVAQIARTLARSLRVSEDLTEAIALAHDLGHTPFGHAGQDELNACMRELAPQAGGFEHNLQSLRVVDELEERYAEFNGLNLCFETREGILKHCSATHARQLGAVGERFLDRTQPSLEAQLANLADEVAYNNHDVDDGLRSGLITLEQLQEVGIFARHYAEVARRYPQLAPRRATSETIRRMINTLIVDLTATSLARIRDHAPASADDVRRAPPLAGFSAAVRREADELKKFLFDNLYRHYRVVRMTTKAQRIVRELFQAFLGDPRLLPPDYRREQPQDQARAISDYIAGMTDRYAIREHRRLFEMG.

Residues 13–42 (LASYASDPSKTRGRRHSEPPPENRTEFQRD) are disordered. Over residues 28 to 42 (HSEPPPENRTEFQRD) the composition is skewed to basic and acidic residues. Residues 73–208 (RLTHSLEVAQ…ANLADEVAYN (136 aa)) enclose the HD domain.

It belongs to the dGTPase family. Type 2 subfamily.

This is Deoxyguanosinetriphosphate triphosphohydrolase-like protein from Bordetella bronchiseptica (strain ATCC BAA-588 / NCTC 13252 / RB50) (Alcaligenes bronchisepticus).